The chain runs to 209 residues: Uracil phosphoribosyltransferase (209 aa).

Residues Arg-79, Arg-104, and 131-139 (DPMLATGGS) each bind 5-phospho-alpha-D-ribose 1-diphosphate. Uracil contacts are provided by residues Ile-194 and 199 to 201 (GDA). Asp-200 contacts 5-phospho-alpha-D-ribose 1-diphosphate.

The protein belongs to the UPRTase family. It depends on Mg(2+) as a cofactor.

The enzyme catalyses UMP + diphosphate = 5-phospho-alpha-D-ribose 1-diphosphate + uracil. Its pathway is pyrimidine metabolism; UMP biosynthesis via salvage pathway; UMP from uracil: step 1/1. Allosterically activated by GTP. Its function is as follows. Catalyzes the conversion of uracil and 5-phospho-alpha-D-ribose 1-diphosphate (PRPP) to UMP and diphosphate. This is Uracil phosphoribosyltransferase from Anoxybacillus flavithermus (strain DSM 21510 / WK1).